The following is a 252-amino-acid chain: uncharacterized protein (252 aa).

This is an uncharacterized protein from Saccharolobus islandicus (Sulfolobus islandicus).